Consider the following 484-residue polypeptide: MANNSSYGENVRRKSHTPSAIVIGSGFAGIAAANALRNASFEVVLLESRDRIGGRIHTDYSFGFPVDLGASWLHGVCEENPLAPIIGRLGLPLYRTSGDDSVLFDHDLESYALYDTKGHQVPQELVEKIGKVFETILEETGKLREETKEDISIAKAIAIVMERNPHLRQEGIAHDVLQWYLCRMEGWFATDADAISLQGWDQEVLLPGGHGLMVRGYRPVINTLAKGLDIRLGHRVVEIVRHRNRVEVTVSSGKTFVADAAVIAVPLGVLKANTIKFEPRLPEWKEEAIRELSVGVENKIILHFSEVFWPNVEFLGVVSSTTYGCSYFLNLHKATGHPVLVYMPAGRLACDIEKLSDEAAAQFAFSQLKKILPNAAEPIHYLVSHWGSDENTLGSYTFDGVGKPRDLYEKLRIPVDNLFFAGEATSVQYTGTVHGAFSTGLMAAEECRMRVLERFRELDMLEMCHPAMGEQTATVSVPLLISRL.

Residues E47, R55, V236, and E423 each coordinate FAD. The short motif at 482–484 (SRL) is the Microbody targeting signal element.

The protein belongs to the flavin monoamine oxidase family. FAD serves as cofactor. In terms of tissue distribution, widely expressed.

Its subcellular location is the peroxisome. The enzyme catalyses spermine + O2 + H2O = 3-aminopropanal + spermidine + H2O2. It catalyses the reaction N(1)-acetylspermine + O2 + H2O = 3-acetamidopropanal + spermidine + H2O2. It carries out the reaction norspermine + O2 + H2O = norspermidine + 3-aminopropanal + H2O2. The catalysed reaction is spermidine + O2 + H2O = 3-aminopropanal + putrescine + H2O2. The enzyme catalyses thermospermine + O2 + H2O = 3-aminopropanal + spermidine + H2O2. It participates in amine and polyamine degradation; spermine degradation. It functions in the pathway amine and polyamine degradation; spermidine degradation. In terms of biological role, flavoenzyme involved in polyamine back-conversion. Catalyzes the oxidation of the secondary amino group of polyamines, such as spermine, spermidine and their acetyl derivatives. Substrate preference is spermidine &gt; norspermine &gt; thermospermine &gt; N(1)-acetylspermine &gt; spermine. No activity detected when putrescine is used as substrate. Plays an important role in the regulation of polyamine intracellular concentration. The chain is Polyamine oxidase 3 from Oryza sativa subsp. japonica (Rice).